The sequence spans 363 residues: Holliday junction branch migration complex subunit RuvB (363 aa).

Positions 1 to 32 are disordered; that stretch reads MSDVERTEFEIPGGIPPRRNGGQGRAADTNVD. A large ATPase domain (RuvB-L) region spans residues 27–207; the sequence is ADTNVDANLK…FGFTAQMEFY (181 aa). ATP-binding positions include leucine 46, arginine 47, glycine 88, lysine 91, threonine 92, threonine 93, 154–156, arginine 197, tyrosine 207, and arginine 244; that span reads EDF. Position 92 (threonine 92) interacts with Mg(2+). Residues 208 to 278 are small ATPAse domain (RuvB-S); it reads DVPDLTKVVK…AANAALIVFD (71 aa). Residues 281 to 363 are head domain (RuvB-H); that stretch reads EVGLDRLDRA…EPPEGTIGDY (83 aa). The DNA site is built by arginine 336 and arginine 341.

It belongs to the RuvB family. As to quaternary structure, homohexamer. Forms an RuvA(8)-RuvB(12)-Holliday junction (HJ) complex. HJ DNA is sandwiched between 2 RuvA tetramers; dsDNA enters through RuvA and exits via RuvB. An RuvB hexamer assembles on each DNA strand where it exits the tetramer. Each RuvB hexamer is contacted by two RuvA subunits (via domain III) on 2 adjacent RuvB subunits; this complex drives branch migration. In the full resolvosome a probable DNA-RuvA(4)-RuvB(12)-RuvC(2) complex forms which resolves the HJ.

It is found in the cytoplasm. The enzyme catalyses ATP + H2O = ADP + phosphate + H(+). Functionally, the RuvA-RuvB-RuvC complex processes Holliday junction (HJ) DNA during genetic recombination and DNA repair, while the RuvA-RuvB complex plays an important role in the rescue of blocked DNA replication forks via replication fork reversal (RFR). RuvA specifically binds to HJ cruciform DNA, conferring on it an open structure. The RuvB hexamer acts as an ATP-dependent pump, pulling dsDNA into and through the RuvAB complex. RuvB forms 2 homohexamers on either side of HJ DNA bound by 1 or 2 RuvA tetramers; 4 subunits per hexamer contact DNA at a time. Coordinated motions by a converter formed by DNA-disengaged RuvB subunits stimulates ATP hydrolysis and nucleotide exchange. Immobilization of the converter enables RuvB to convert the ATP-contained energy into a lever motion, pulling 2 nucleotides of DNA out of the RuvA tetramer per ATP hydrolyzed, thus driving DNA branch migration. The RuvB motors rotate together with the DNA substrate, which together with the progressing nucleotide cycle form the mechanistic basis for DNA recombination by continuous HJ branch migration. Branch migration allows RuvC to scan DNA until it finds its consensus sequence, where it cleaves and resolves cruciform DNA. The sequence is that of Holliday junction branch migration complex subunit RuvB from Corynebacterium glutamicum (strain R).